The following is a 976-amino-acid chain: Probable outer membrane protein PmpA (976 aa).

Positions 1 to 50 (MNQVIKTIALCYQKYISRASNKTFSIHNTLSLSLLPKCLLGSLIIYTSHA) are cleaved as a signal peptide. Residues 671–976 (GNAIPNSLWS…SLSCGGYVGF (306 aa)) enclose the Autotransporter domain.

The protein belongs to the PMP outer membrane protein family.

It localises to the secreted. Its subcellular location is the cell wall. The protein localises to the cell outer membrane. The polypeptide is Probable outer membrane protein PmpA (pmpA) (Chlamydia muridarum (strain MoPn / Nigg)).